The following is a 104-amino-acid chain: Replication restart protein PriB (104 aa).

The SSB domain maps to 1–101; the sequence is MTNRLVLSGT…LHAEQIELID (101 aa).

Belongs to the PriB family. Homodimer. Interacts with PriA and DnaT. Component of the replication restart primosome. Primosome assembly occurs via a 'hand-off' mechanism. PriA binds to replication forks, subsequently PriB then DnaT bind; DnaT then displaces ssDNA to generate the helicase loading substrate.

Its function is as follows. Involved in the restart of stalled replication forks, which reloads the replicative helicase on sites other than the origin of replication; the PriA-PriB pathway is the major replication restart pathway. During primosome assembly it facilitates complex formation between PriA and DnaT on DNA; stabilizes PriA on DNA. Stimulates the DNA unwinding activity of PriA helicase. This chain is Replication restart protein PriB, found in Escherichia coli (strain ATCC 8739 / DSM 1576 / NBRC 3972 / NCIMB 8545 / WDCM 00012 / Crooks).